The primary structure comprises 264 residues: Spermidine/putrescine transport system permease protein PotC (264 aa).

The next 6 helical transmembrane spans lie at 10 to 30 (FMTA…VNSF), 66 to 86 (MAVF…VALY), 109 to 129 (IVMA…LGFW), 131 to 151 (LLFS…YSRL), 176 to 196 (IILP…FTLS), and 232 to 252 (ALAT…QLIA). The ABC transmembrane type-1 domain occupies 60-248 (AQHSLTMAVF…VLSLVMVIAS (189 aa)).

It belongs to the binding-protein-dependent transport system permease family. CysTW subfamily.

It localises to the cell inner membrane. In terms of biological role, required for the activity of the bacterial periplasmic transport system of putrescine and spermidine. This Shigella flexneri protein is Spermidine/putrescine transport system permease protein PotC (potC).